The following is a 319-amino-acid chain: Thioredoxin reductase (319 aa).

36-43 (TGINKGGQ) lines the FAD pocket. Cys-136 and Cys-139 are oxidised to a cystine. 288–297 (DVIDHVYRQA) provides a ligand contact to FAD.

It belongs to the class-II pyridine nucleotide-disulfide oxidoreductase family. Homodimer. FAD is required as a cofactor.

It is found in the cytoplasm. The catalysed reaction is [thioredoxin]-dithiol + NADP(+) = [thioredoxin]-disulfide + NADPH + H(+). In Buchnera aphidicola subsp. Schizaphis graminum (strain Sg), this protein is Thioredoxin reductase (trxB).